A 497-amino-acid chain; its full sequence is Cysteine desulfurase, mitochondrial (497 aa).

Residues Met1–Phe33 constitute a mitochondrion transit peptide. Pyridoxal 5'-phosphate is bound by residues Ala168–Thr169, Asn248, Gln276, and Ser296–His298. Lys299 carries the post-translational modification N6-(pyridoxal phosphate)lysine. Thr336 serves as a coordination point for pyridoxal 5'-phosphate. The Cysteine persulfide intermediate role is filled by Cys421. Cys421 is a binding site for [2Fe-2S] cluster.

This sequence belongs to the class-V pyridoxal-phosphate-dependent aminotransferase family. NifS/IscS subfamily. The cofactor is pyridoxal 5'-phosphate.

It localises to the mitochondrion. The enzyme catalyses (sulfur carrier)-H + L-cysteine = (sulfur carrier)-SH + L-alanine. Its function is as follows. Catalyzes the removal of elemental sulfur from cysteine to produce alanine. It supplies the inorganic sulfur for iron-sulfur (Fe-S) clusters. Plays a role in both tRNA-processing and mitochondrial metabolism. Involved in the 2-thio-modification of both 5-carboxymethylaminomethyl-2-thiouridine in mitochondrial tRNAs and 5-methoxycarbonylmethyl-2-thiouridine (mcm5s2U) in cytoplasmic tRNAs. This chain is Cysteine desulfurase, mitochondrial, found in Saccharomyces cerevisiae (strain ATCC 204508 / S288c) (Baker's yeast).